A 314-amino-acid polypeptide reads, in one-letter code: Testisin (314 aa).

A signal peptide spans 1-19 (MGARGALLLALLLARAGLR). The propeptide occupies 20 to 41 (KPESQEAAPLSGPCGRRVITSR). 2 disulfides stabilise this stretch: cysteine 33-cysteine 157 and cysteine 67-cysteine 83. In terms of domain architecture, Peptidase S1 spans 42–286 (IVGGEDAELG…HFEWIQKLMA (245 aa)). Residues histidine 82 and aspartate 137 each act as charge relay system in the active site. Asparagine 167 and asparagine 200 each carry an N-linked (GlcNAc...) asparagine glycan. Cystine bridges form between cysteine 171/cysteine 244, cysteine 204/cysteine 223, and cysteine 234/cysteine 262. The Charge relay system role is filled by serine 238. An N-linked (GlcNAc...) asparagine glycan is attached at asparagine 273. A lipid anchor (GPI-anchor amidated serine) is attached at serine 288. Residues 289–314 (GMSQPDPSWPLLFFPLLWALPLLGPV) constitute a propeptide, removed in mature form.

It belongs to the peptidase S1 family. Expressed predominantly in premeiotic testicular germ cells, mostly late pachytene and diplotene spermatocytes.

The protein localises to the cell membrane. Could regulate proteolytic events associated with testicular germ cell maturation. The chain is Testisin (PRSS21) from Homo sapiens (Human).